Consider the following 195-residue polypeptide: Thymidine kinase (195 aa).

Residues 15–22 (GPMYSGKS), E23, 57–58 (SH), and 88–91 (DEVQ) contribute to the ATP site. E89 serves as the catalytic Proton acceptor. F120 provides a ligand contact to substrate. The Zn(2+) site is built by C145 and C148. Y179 is a substrate binding site. The Zn(2+) site is built by C183 and C186.

It belongs to the thymidine kinase family.

It is found in the cytoplasm. The enzyme catalyses thymidine + ATP = dTMP + ADP + H(+). This is Thymidine kinase from Clostridium acetobutylicum (strain ATCC 824 / DSM 792 / JCM 1419 / IAM 19013 / LMG 5710 / NBRC 13948 / NRRL B-527 / VKM B-1787 / 2291 / W).